A 1311-amino-acid polypeptide reads, in one-letter code: Protein PARALOG OF AIPP2 (1311 aa).

Disordered stretches follow at residues 1-21 (MADR…KVES), 114-141 (ISDD…VSAS), and 178-280 (GNKD…EMVE). The segment covering 213-240 (NHDDRVSSEKGNFKEKSRPGGNKERQEP) has biased composition (basic and acidic residues). Over residues 258 to 270 (SKSSSSNSSAVSE) the composition is skewed to low complexity. Residues 283–334 (VKVCDICGDAGREDLLAICSGCSDGAEHTYCMREMLDEVPEGDWLCEECAEE) form a PHD-type zinc finger. Residues Cys-286, Cys-289, Cys-301, Cys-304, His-310, Cys-313, Cys-328, and Cys-331 each coordinate Zn(2+). The stretch at 328–348 (CEECAEEAEKQKQEAKRKRET) forms a coiled coil. Disordered stretches follow at residues 369 to 390 (PDAK…ILPR), 411 to 440 (NHQT…FLKS), 460 to 701 (HPRQ…EDLN), 975 to 1050 (TNPQ…PSKK), 1059 to 1078 (EAGV…GDSL), 1087 to 1138 (EQEL…NPAN), 1152 to 1186 (NDGL…GIMK), and 1249 to 1311 (LSRS…DLPR). Residues 411 to 431 (NHQTSFSDDTESARSAGSQLQ) show a composition bias toward polar residues. A compositionally biased stretch (basic and acidic residues) spans 460-472 (HPRQKTGKEDTAL). Residues 487–502 (PSRTTDAGNSGGSDSQ) show a composition bias toward polar residues. The span at 512–528 (HSQEGKSLKQVKDRNRE) shows a compositional bias: basic and acidic residues. Residues 529 to 552 (ANASASSIDQKLKSRGNSSVSHAN) show a composition bias toward polar residues. Over residues 553–566 (NNRDLKGLQSDGKR) the composition is skewed to basic and acidic residues. A compositionally biased stretch (polar residues) spans 569–607 (LTKQVSNLSRNRLENSVVSGGDISTNEKCSASEQSSSQA). Residues 640 to 653 (VPREVGKKSKEAFS) are compositionally biased toward basic and acidic residues. Composition is skewed to polar residues over residues 668–694 (PSSQ…STTK), 977–988 (PQKNTSLPTSNV), and 1014–1025 (LRESSSNGIETR). The span at 1026 to 1050 (NGTDARSHENPNNRESSIERSPSKK) shows a compositional bias: basic and acidic residues. Positions 1087 to 1096 (EQELGGRKDL) are enriched in basic and acidic residues. A compositionally biased stretch (polar residues) spans 1250-1263 (SRSSNSGEQSNNSM). Residues 1256-1276 (GEQSNNSMNKEKQKADEEEED) adopt a coiled-coil conformation. A compositionally biased stretch (low complexity) spans 1280-1289 (VAASLSLSLS).

As to quaternary structure, part of the BAH-PHD bivalent histone reader complex that contains AIPP2, PAIPP2 and AIPP3/BDT1; the BAH-PHD module associates with CPL2 to form the BAH-PHD-CPL2 complex (BPC) for transcriptional repression. Binds directly to AIPP3/BDT1 and CPL2, but not to AIPP2. In terms of tissue distribution, expressed ubiquitously.

In terms of biological role, together with AIPP2 and AIPP3/BDT1, cooperates to form a BAH-PHD bivalent histone reader complex able to read histone H3 lysine 27 trimethylation (H3K27me3) and low-methylated H3K4 histone marks in order to regulate transcription, especially to prevent early flowering; promotes AIPP3/BDT1 binding to H3K27me3. CPL2 is subsequently recruited to form a BAH-PHD-CPL2 complex (BPC) in order to silence several H3K27me3 and low-methylated H3K4 enriched loci, including AGO5, via the phosphorylation state-dependent inhibition of Pol II release from the transcriptional start site (e.g. Ser5P-Pol II dephosphorylation). The BPC complex represses flowering by inhibiting the expression of several genes, including AGL6, FT, FUL and SOC1. The chain is Protein PARALOG OF AIPP2 from Arabidopsis thaliana (Mouse-ear cress).